Consider the following 327-residue polypeptide: Olfactory receptor 51T1 (327 aa).

At 1-27 the chain is on the extracellular side; sequence MAIFNNTTSSSSNFLLTAFPGLECAHV. Asn-5 and Asn-6 each carry an N-linked (GlcNAc...) asparagine glycan. The helical transmembrane segment at 28 to 48 threads the bilayer; that stretch reads WISIPVCCLYTIALLGNSMIF. Topologically, residues 49–56 are cytoplasmic; sequence LVIITKRR. A helical transmembrane segment spans residues 57-77; that stretch reads LHKPMYYFLSMLAAVDLCLTI. Over 78-101 the chain is Extracellular; it reads TTLPTVLGVLWFHAREISFKACFI. Residues 102–122 form a helical membrane-spanning segment; the sequence is QMFFVHAFSLLESSVLVAMAF. The Cytoplasmic segment spans residues 123–141; the sequence is DRFVAICNPLNYATILTDR. Residues 142–162 form a helical membrane-spanning segment; the sequence is MVLVIGLVICIRPAVFLLPLL. Over 163–198 the chain is Extracellular; sequence VAINTVSFHGGHELSHPFCYHPEVIKYTYSKPWISS. Residues 199-219 form a helical membrane-spanning segment; it reads FWGLFLQLYLNGTDVLFILFS. The Cytoplasmic segment spans residues 220–239; the sequence is YVLILRTVLGIVARKKQQKA. A helical transmembrane segment spans residues 240-260; it reads LSTCVCHICAVTIFYVPLISL. At 261-275 the chain is on the extracellular side; the sequence is SLAHRLFHSTPRVLC. The helical transmembrane segment at 276 to 296 threads the bilayer; it reads STLANIYLLLPPVLNPIIYSL. Residues 297–327 lie on the Cytoplasmic side of the membrane; that stretch reads KTKTIRQAMFQLLQSKGSWGFNVRGLRGRWD.

This sequence belongs to the G-protein coupled receptor 1 family.

It localises to the cell membrane. Its function is as follows. Odorant receptor. The protein is Olfactory receptor 51T1 (OR51T1) of Homo sapiens (Human).